The primary structure comprises 200 residues: UPF0488 protein CG14286 (200 aa).

Disordered regions lie at residues 1 to 28 and 139 to 174; these read MHKR…PVAE and KDFR…AEAG.

Belongs to the UPF0488 family.

The sequence is that of UPF0488 protein CG14286 from Drosophila melanogaster (Fruit fly).